Here is a 155-residue protein sequence, read N- to C-terminus: Basic phospholipase A2 PC9 (155 aa).

An N-terminal signal peptide occupies residues Met1–Ala21. Positions Ile22 to Leu27 are excised as a propeptide. 7 cysteine pairs are disulfide-bonded: Cys38–Cys98, Cys54–Cys144, Cys56–Cys72, Cys71–Cys125, Cys78–Cys118, Cys87–Cys111, and Cys105–Cys116. Residues Tyr55, Gly57, and Gly59 each contribute to the Ca(2+) site. Residue His75 is part of the active site. Asp76 contacts Ca(2+). Residue Asp119 is part of the active site.

Belongs to the phospholipase A2 family. Group I subfamily. D49 sub-subfamily. It depends on Ca(2+) as a cofactor. As to expression, expressed by the venom gland.

Its subcellular location is the secreted. The catalysed reaction is a 1,2-diacyl-sn-glycero-3-phosphocholine + H2O = a 1-acyl-sn-glycero-3-phosphocholine + a fatty acid + H(+). Its function is as follows. Snake venom phospholipase A2 (PLA2) that inhibits neuromuscular transmission by blocking acetylcholine release from the nerve termini. PLA2 catalyzes the calcium-dependent hydrolysis of the 2-acyl groups in 3-sn-phosphoglycerides. The polypeptide is Basic phospholipase A2 PC9 (Laticauda colubrina (Yellow-lipped sea krait)).